Reading from the N-terminus, the 467-residue chain is MRSLTRRDFLKSGILASSLSCIPQSVMAASRLPLFIPPLLEAKRGRPIFLTMQAAQTSFIEKKLTEVWGFNGHHLGPTVRVEQGDFVKLNYRNNLTQAVAMNIQGLQAHSELIGGIGRVLKAGEGWAPILPITQPASTCFYHACTLANSAYQTYRGLVGMWIINDKDTHQSKLPKKYGVDDIPLILQDVLLNSKGEQVFQNQPHFLGERLLVNGVEAPYLNVPKGLVRLRLLNASLSRSYDLTFDDERAFFLIAREQGYLPQTKIVKKVSLAPSERVELLVDLSEGGNVTLITGSKRNLLNKIGTIFSSDMLVDNVIVELRTEGVKSVFYNPSHWQFHTDAPSLLAKKNMKTREFYFDVSNATINQQRFEPNRIDISTKRGQIERWILSSSRPVGFKIQGARFVMKSINDQPVEQSDIAWKDSLWIDGKVEILVQFNHASSTKFPFIFGSSDLVLADQGCLGSIVVQ.

The tat-type signal signal peptide spans Met1–Ala28.

This sequence belongs to the FtsP family. Post-translationally, predicted to be exported by the Tat system. The position of the signal peptide cleavage has not been experimentally proven.

It is found in the periplasm. Functionally, cell division protein that is required for growth during stress conditions. May be involved in protecting or stabilizing the divisomal assembly under conditions of stress. The chain is Cell division protein FtsP from Histophilus somni (strain 2336) (Haemophilus somnus).